The chain runs to 78 residues: Acyl carrier protein (78 aa).

The 76-residue stretch at 2 to 77 (STIEERVKKI…AAIDFIQANQ (76 aa)) folds into the Carrier domain. Ser-37 is subject to O-(pantetheine 4'-phosphoryl)serine.

This sequence belongs to the acyl carrier protein (ACP) family. In terms of processing, 4'-phosphopantetheine is transferred from CoA to a specific serine of apo-ACP by AcpS. This modification is essential for activity because fatty acids are bound in thioester linkage to the sulfhydryl of the prosthetic group.

It is found in the cytoplasm. It functions in the pathway lipid metabolism; fatty acid biosynthesis. Its function is as follows. Carrier of the growing fatty acid chain in fatty acid biosynthesis. This Pectobacterium atrosepticum (strain SCRI 1043 / ATCC BAA-672) (Erwinia carotovora subsp. atroseptica) protein is Acyl carrier protein.